The sequence spans 105 residues: Thioredoxin (105 aa).

Residues 2–105 form the Thioredoxin domain; the sequence is VKLIESKEAF…KLEATITEFA (104 aa). Lys3 carries the post-translational modification N6-acetyllysine. Lys8 is modified (N6-succinyllysine). Catalysis depends on nucleophile residues Cys32 and Cys35. A disulfide bridge connects residues Cys32 and Cys35. Lys39 is subject to N6-acetyllysine. 2 positions are modified to S-nitrosocysteine: Cys62 and Cys69. Cys73 carries the S-nitrosocysteine; alternate modification. Residue Lys94 is modified to N6-acetyllysine; alternate. At Lys94 the chain carries N6-succinyllysine; alternate.

The protein belongs to the thioredoxin family. In terms of assembly, homodimer; disulfide-linked. Interacts with TXNIP through the redox-active site. Interacts with MAP3K5 and CASP3. Interacts with APEX1; the interaction stimulates the FOS/JUN AP-1 DNA-binding activity in a redox-dependent manner. In terms of processing, in the fully reduced protein, both Cys-69 and Cys-73 are nitrosylated in response to nitric oxide (NO). When two disulfide bonds are present in the protein, only Cys-73 is nitrosylated. Cys-73 can serve as donor for nitrosylation of target proteins.

The protein localises to the nucleus. It localises to the cytoplasm. It is found in the secreted. Participates in various redox reactions through the reversible oxidation of its active center dithiol to a disulfide and catalyzes dithiol-disulfide exchange reactions. Plays a role in the reversible S-nitrosylation of cysteine residues in target proteins, and thereby contributes to the response to intracellular nitric oxide. Nitrosylates the active site Cys of CASP3 in response to nitric oxide (NO), and thereby inhibits caspase-3 activity. Induces the FOS/JUN AP-1 DNA binding activity in ionizing radiation (IR) cells through its oxidation/reduction status and stimulates AP-1 transcriptional activity. This chain is Thioredoxin (Txn), found in Rattus norvegicus (Rat).